A 447-amino-acid polypeptide reads, in one-letter code: Tubulin beta chain (447 aa).

Residues Gln-11, Glu-69, Ser-138, Gly-142, Thr-143, Gly-144, Asn-204, and Asn-226 each contribute to the GTP site. Residue Glu-69 participates in Mg(2+) binding. The interval Tyr-425–Glu-447 is disordered. Residues Glu-432–Glu-447 show a composition bias toward acidic residues.

The protein belongs to the tubulin family. Dimer of alpha and beta chains. A typical microtubule is a hollow water-filled tube with an outer diameter of 25 nm and an inner diameter of 15 nM. Alpha-beta heterodimers associate head-to-tail to form protofilaments running lengthwise along the microtubule wall with the beta-tubulin subunit facing the microtubule plus end conferring a structural polarity. Microtubules usually have 13 protofilaments but different protofilament numbers can be found in some organisms and specialized cells. Requires Mg(2+) as cofactor.

The protein localises to the cytoplasm. It localises to the cytoskeleton. In terms of biological role, tubulin is the major constituent of microtubules, a cylinder consisting of laterally associated linear protofilaments composed of alpha- and beta-tubulin heterodimers. Microtubules grow by the addition of GTP-tubulin dimers to the microtubule end, where a stabilizing cap forms. Below the cap, tubulin dimers are in GDP-bound state, owing to GTPase activity of alpha-tubulin. This Phaeosphaeria nodorum (strain SN15 / ATCC MYA-4574 / FGSC 10173) (Glume blotch fungus) protein is Tubulin beta chain (tubB).